Consider the following 671-residue polypeptide: MPHLPDSMSPEAPAGPAPATLPAHPAQLLSDVAGLPPLPGVYRYFDFDGAVLYVGKAINLKKRVSSYFQKNHGGTRIGHMVSKIVRLETTVVRSEAEALLLENNLIKTLNPKYNILFRDDKSYPYLKMTGASSSSNPGTSFPRVSYYRGAVEKKHQYFGPYPSAWAVKEAILLMQKVFHLRTCEDPVFNNRTRPCLLYQIKRCSAPCVGHISAADYAQDVANAERFLRGDARQVMEALEARMMAHAEKLEFEQAAELRNQVAALSNVLHQQSVDNVADRDVDILAVKVQGGRACVNLAMVRGGRHLGDRPYFPAHVEDATEIYNAGGFEEAVEDSTTAPPVPSVETQVLEAFVAQHYLNVPVPPTLIVSAPVNKQLLEALAIQSGVKVTAVHQPREQRRVWLEMAQTNAGLQLARLLSEEGSQQARTRALAEALDLALDDLDALRVECFDISHTAGEATQASCVVFAHHKMQNAEYRRYNINDITPGDDYAAMRQVLLRRYGKLAETLREAQQTGQMPAGTGRLPDLVLVDGGRGQVSMAREVFEQLGLDLSLIVGVEKGEGRKVGLEELVFADGREKVYLGKDSAALMLVAQIRDEAHRFAITGMRAKRAKVRVDGGKLEEIPGIGPKRRSKLLQRFGGVRGVALAGAEDIATVAGISRELAEEIYRALH.

A disordered region spans residues 1 to 20; the sequence is MPHLPDSMSPEAPAGPAPAT. Residues 10–20 show a composition bias toward low complexity; the sequence is PEAPAGPAPAT. The GIY-YIG domain maps to 37–115; it reads PLPGVYRYFD…IKTLNPKYNI (79 aa). Residues 232–267 form the UVR domain; the sequence is RQVMEALEARMMAHAEKLEFEQAAELRNQVAALSNV.

This sequence belongs to the UvrC family. Interacts with UvrB in an incision complex.

It is found in the cytoplasm. Its function is as follows. The UvrABC repair system catalyzes the recognition and processing of DNA lesions. UvrC both incises the 5' and 3' sides of the lesion. The N-terminal half is responsible for the 3' incision and the C-terminal half is responsible for the 5' incision. This chain is UvrABC system protein C, found in Albidiferax ferrireducens (strain ATCC BAA-621 / DSM 15236 / T118) (Rhodoferax ferrireducens).